The primary structure comprises 249 residues: MATLRVHPEAQAKVDVFREDLCSKTENLLGSYFPKKISELDAFLKEPALNEANLSNLKAPLDIPVPDPVKEKEKEERKKQQEKEEKDEKKKGDEDDKGPPCGPVNCNEKIVVLLQRLKPEIKDVIEQLNLVTTWLQLQIPRIEDGNNFGVAVQAKVFELMTSLHTKLEGFQTQISKYFSERGDAVAKAAKQPHVGDYRQLVHELDEAEYQEIRLMVMEIRNAYAVLYDIILKNFEKLKKPRGETKGMIY.

Residues 60-102 (PLDIPVPDPVKEKEKEERKKQQEKEEKDEKKKGDEDDKGPPCG) form a disordered region. The segment covering 68–98 (PVKEKEKEERKKQQEKEEKDEKKKGDEDDKG) has biased composition (basic and acidic residues).

The protein belongs to the PA28 family. In terms of assembly, heterodimer of PSME1 and PSME2, which forms a hexameric ring. PSME1 can form homoheptamers.

Implicated in immunoproteasome assembly and required for efficient antigen processing. The PA28 activator complex enhances the generation of class I binding peptides by altering the cleavage pattern of the proteasome. The protein is Proteasome activator complex subunit 1 (Psme1) of Rattus norvegicus (Rat).